Reading from the N-terminus, the 358-residue chain is Nuclear receptor subfamily 1 group I member 3 (358 aa).

Positions 18–93 form a DNA-binding region, nuclear receptor; the sequence is PRNCVVCGDR…VGMRKDMILS (76 aa). The segment at 21–41 adopts an NR C4-type zinc-finger fold; the sequence is CVVCGDRATGYHFHALTCEGC. T48 carries the phosphothreonine; by PKC modification. The NR C4-type zinc finger occupies 57-81; it reads CPFAGRCEVSKAQRRHCPACRLQKC. The NR LBD domain maps to 119 to 358; that stretch reads QQKELIQTLL…MMPLLGEICS (240 aa).

It belongs to the nuclear hormone receptor family. NR1 subfamily. Heterodimer of NR1I3 and RXR. Interacts with PSMC4. Interacts with ECT2. Directly interacts with DNAJC7; this complex may also include HSP90. Interacts with CRY1. Interacts with CRY2 in a ligand-dependent manner. In terms of processing, phosphorylated at Thr-48 by PKC, dephosphorylation of Thr-48 is required for nuclear translocation and activation.

It is found in the nucleus. The protein localises to the cytoplasm. The protein resides in the cytoskeleton. Functionally, binds and transactivates the retinoic acid response elements that control expression of the retinoic acid receptor beta 2 and alcohol dehydrogenase 3 genes. Transactivates both the phenobarbital responsive element module of the human CYP2B6 gene and the CYP3A4 xenobiotic response element. The chain is Nuclear receptor subfamily 1 group I member 3 (Nr1i3) from Rattus norvegicus (Rat).